A 169-amino-acid polypeptide reads, in one-letter code: Allophycocyanin subunit beta-18 (169 aa).

The residue at position 72 (asparagine 72) is an N4-methylasparagine. Position 82 (cysteine 82) interacts with (2R,3E)-phycocyanobilin.

It belongs to the phycobiliprotein family. Heterodimer of an alpha and a beta chain. Contains one covalently linked bilin chromophore.

The protein resides in the plastid. It localises to the chloroplast thylakoid membrane. Its function is as follows. Light-harvesting photosynthetic bile pigment-protein from the phycobiliprotein complex. Allophycocyanin has a maximum absorption at approximately 650 nanometers. This chain is Allophycocyanin subunit beta-18 (apcF), found in Porphyra purpurea (Red seaweed).